The sequence spans 160 residues: MAPK regulated corepressor interacting protein 2 (160 aa).

An N-acetylmethionine modification is found at methionine 1. The segment at 1–64 is disordered; the sequence is MYTITKGPSK…GPWPLSSPGP (64 aa). The residue at position 35 (arginine 35) is an Omega-N-methylarginine. Residues 37-61 show a composition bias toward pro residues; it reads PAPPTSQPPRAQPFAQPPGPWPLSS. Serine 61 is modified (phosphoserine). Omega-N-methylarginine is present on arginine 65. Position 82 is a phosphoserine (serine 82).

This sequence belongs to the MCRIP family. Interacts with DDX6. Interacts with MCRIP1.

Its subcellular location is the cytoplasm. It is found in the stress granule. The protein resides in the nucleus. This is MAPK regulated corepressor interacting protein 2 (MCRIP2) from Homo sapiens (Human).